The following is a 292-amino-acid chain: NAD kinase (292 aa).

The Proton acceptor role is filled by aspartate 73. NAD(+) is bound by residues 73–74 (DG), 147–148 (NE), histidine 158, arginine 175, aspartate 177, 188–193 (TAYSLS), and glutamine 247.

It belongs to the NAD kinase family. The cofactor is a divalent metal cation.

The protein localises to the cytoplasm. The enzyme catalyses NAD(+) + ATP = ADP + NADP(+) + H(+). Involved in the regulation of the intracellular balance of NAD and NADP, and is a key enzyme in the biosynthesis of NADP. Catalyzes specifically the phosphorylation on 2'-hydroxyl of the adenosine moiety of NAD to yield NADP. The protein is NAD kinase of Erwinia tasmaniensis (strain DSM 17950 / CFBP 7177 / CIP 109463 / NCPPB 4357 / Et1/99).